Consider the following 239-residue polypeptide: MAKPCGVRLSGEARKQVEVFRQNLFQEAEEFLYRFLPQKIIYLNQLLQEDSLNVADLTSLRAPLDIPIPDPPPKDDEMETDKQEKKEVHKCGFLPGNEKVLSLLALVKPEVWTLKEKCILVITWIQHLIPKIEDGNDFGVAIQEKVLERVNAVKTKVEAFQTTISKYFSERGDAVAKASKETHVMDYRALVHERDEAAYGELRAMVLDLRAFYAELYHIISSNLEKIVNPKGEEKPSMY.

Ala2 bears the N-acetylalanine mark. Ser10 is subject to Phosphoserine.

The protein belongs to the PA28 family. In terms of assembly, heterodimer of PSME1 and PSME2, which forms a hexameric ring.

In terms of biological role, implicated in immunoproteasome assembly and required for efficient antigen processing. The PA28 activator complex enhances the generation of class I binding peptides by altering the cleavage pattern of the proteasome. The sequence is that of Proteasome activator complex subunit 2 (PSME2) from Homo sapiens (Human).